Consider the following 416-residue polypeptide: Enolase (416 aa).

Residue Q156 coordinates (2R)-2-phosphoglycerate. E200 acts as the Proton donor in catalysis. Residues D236, E281, and D308 each coordinate Mg(2+). Residues K333, R362, S363, and K384 each coordinate (2R)-2-phosphoglycerate. K333 functions as the Proton acceptor in the catalytic mechanism.

This sequence belongs to the enolase family. Mg(2+) is required as a cofactor.

It is found in the cytoplasm. Its subcellular location is the secreted. It localises to the cell surface. It catalyses the reaction (2R)-2-phosphoglycerate = phosphoenolpyruvate + H2O. The protein operates within carbohydrate degradation; glycolysis; pyruvate from D-glyceraldehyde 3-phosphate: step 4/5. Catalyzes the reversible conversion of 2-phosphoglycerate (2-PG) into phosphoenolpyruvate (PEP). It is essential for the degradation of carbohydrates via glycolysis. This Methanothermobacter thermautotrophicus (strain ATCC 29096 / DSM 1053 / JCM 10044 / NBRC 100330 / Delta H) (Methanobacterium thermoautotrophicum) protein is Enolase.